The primary structure comprises 727 residues: Capsid protein VP1 (727 aa).

Over residues 1 to 10 the composition is skewed to basic residues; it reads MAPPAKRARR. 3 disordered regions span residues 1–38, 95–120, and 141–184; these read MAPPAKRARRGLVPPGYKYLGPGNSLDQGEPTNPSDAA, VLTDTPDHPSTSRPTKPTKRSKPPPH, and LAPM…VGIS. The Nuclear localization signal motif lies at 4 to 13; that stretch reads PAKRARRGLV. The tract at residues 19–64 is phospholipase A2-like; that stretch reads YLGPGNSLDQGEPTNPSDAAAKEHDEAYAAYLRSGKNPYLYFSPAD. A compositionally biased stretch (polar residues) spans 25–35; that stretch reads SLDQGEPTNPS. Positions 166–183 are enriched in gly residues; the sequence is SGNGSGGGGGGGSGGVGI. Asn-323 is a binding site for Mg(2+). A disulfide bridge connects residues Cys-633 and Cys-637.

Belongs to the parvoviridae capsid protein family. In terms of assembly, interacts with host TFRC.

The protein localises to the virion. It is found in the host nucleus. In terms of biological role, capsid protein self-assembles to form an icosahedral capsid with a T=1 symmetry, about 22 nm in diameter, and consisting of 60 copies of two size variants of the capsid proteins, VP1 and VP2, which differ by the presence of an N-terminal extension in the minor protein VP1. The capsid encapsulates the genomic ssDNA. Capsid proteins are responsible for the attachment to host cell receptors. This attachment induces virion internalization predominantly through clathrin-dependent endocytosis. Binding to the host receptors also induces capsid rearrangements leading to surface exposure of VP1 N-terminus, specifically its phospholipase A2-like region and putative nuclear localization signal(s). VP1 N-terminus might serve as a lipolytic enzyme to breach the endosomal membrane during entry into host cell and might contribute to virus transport to the nucleus. This is Capsid protein VP1 from Feline panleukopenia virus (strain 193) (FPV).